Consider the following 766-residue polypeptide: Leucine-rich repeat and fibronectin type III domain-containing protein 1 (766 aa).

Positions 1-31 are cleaved as a signal peptide; it reads MAPGPFSSGLFSPPPAALPFLLLLWAGASRG. The region spanning 32–65 is the LRRNT domain; sequence QPCPGRCICQNVAPTLTMLCAKTGLLFVPPAIDR. Residues 32–536 are Extracellular-facing; that stretch reads QPCPGRCICQ…LRAHFLGGTM (505 aa). 7 LRR repeats span residues 66 to 87, 90 to 111, 114 to 135, 138 to 159, 163 to 184, 187 to 208, and 211 to 232; these read RVVE…DFAN, SLVH…AFAD, ALRA…QLRG, NLRH…AFDA, TVED…AVGQ, NLNT…TFVQ, and KLVR…GLFL. An N-linked (GlcNAc...) asparagine glycan is attached at Asn87. The LRRCT domain maps to 252–298; the sequence is NPLHCNCELLWLRRLTREDDLETCATPEHLTDRYFWSIPEEEFLCEP. The Ig-like domain occupies 299–386; that stretch reads PLITRQAGGR…GEATAPVEVC (88 aa). Residues Cys321 and Cys370 are joined by a disulfide bond. Asn343 is a glycosylation site (N-linked (GlcNAc...) asparagine). A disordered region spans residues 397–424; the sequence is PAAPPPLTEPGSSDIATPGRPGANDSTS. One can recognise a Fibronectin type-III domain in the interval 424–520; it reads SERRLVAAEL…GCVQFTTAGD (97 aa). Residues 537–557 form a helical membrane-spanning segment; it reads IIAIGGVIVASVLVFIVLLMI. Residues 558–766 are Cytoplasmic-facing; the sequence is RYKVYGDGDS…STEWMLESTV (209 aa). 2 disordered regions span residues 568-601 and 645-742; these read RRIK…PPAP and LCLL…GEDG. Ser713 is modified (phosphoserine). Basic residues predominate over residues 714–727; that stretch reads YPRRARRTKRHRST. The PDZ-binding signature appears at 763–766; that stretch reads ESTV.

The protein belongs to the LRFN family. Can form heteromeric complexes with LRFN2, LRFN3, LRFN4 and LRFN5. Forms homomeric complexes, but not across cell junctions. Interacts with DLG4. Also interacts with DLG1, DLG2, and DLG3. Interacts with 2 AMPA receptor subunits GRIA1 and GRIA2 and NMDA receptor subunit GRIN1. Post-translationally, glycosylated. As to expression, predominantly expressed in the brain, with a weak, but broad expression in the cerebral cortex and diencephalic nuclei. Also detected in other parts of the central nervous system, including the olfactory bulb, pons, cerebellum, and medulla oblongata, as well as in the peripheral nervous system, such as the ganglia of cranial nerves and the dorsal root ganglion during gestation.

The protein localises to the membrane. It is found in the synapse. It localises to the postsynaptic density membrane. Its function is as follows. Promotes neurite outgrowth in hippocampal neurons. Involved in the regulation and maintenance of excitatory synapses. Induces the clustering of excitatory postsynaptic proteins, including DLG4, DLGAP1, GRIA1 and GRIN1. The protein is Leucine-rich repeat and fibronectin type III domain-containing protein 1 (Lrfn1) of Mus musculus (Mouse).